The following is a 561-amino-acid chain: Putative transport protein KPK_3686 (561 aa).

5 helical membrane passes run 8–28, 37–57, 66–86, 94–114, and 158–178; these read LLNGNYILLLFVVLALGLCLG, LGNSIGVLVVSLLLGQQHFAI, FMLFIFCVGVEAGPNFFSIFF, MLALVMVGSAMLIATVLGKVF, and HLSLGYALTYLVGLVSLIVGA. RCK C-terminal domains are found at residues 202–288 and 292–373; these read LDTD…SFRN and VFDR…RIGF. 5 helical membrane passes run 383–403, 406–426, 447–467, 478–498, and 540–560; these read LLAFCAFFIVGLMIGMITFQF, FSFGIGNAAGLLFAGIMLGFL, FGLMVFMAGVGLSAGAGINNG, AGLIVSLLPVVICFLFGAYVL, and AIANVLLTLAGTLIVIIWPGL.

The protein belongs to the AAE transporter (TC 2.A.81) family. YbjL subfamily.

It localises to the cell membrane. The chain is Putative transport protein KPK_3686 from Klebsiella pneumoniae (strain 342).